A 274-amino-acid chain; its full sequence is MFTDKETHRKPFPTWAHLLHSEPSKQFVFGNWKMNKTLTEAQTFLKSFISSDILSNPQIITGIIPPFTLLSACQQAVSDSPIFLGAQTTHEADSGAFTGEISAPMLKDIGVDFVLIGHSERRHIFHEQNPVLAEKAAAAIHSGMIPVLCIGETLEEQESGATQDILLNQLTTGLSKLPEQASFILAYEPVWAIGTGKVAHPDLVQETHAFCRKTIASLFSKDIAERTPILYGGSVKADNARSLSLCPDVNGLLVGGASLSSENFLSIIQQIDIP.

Substrate is bound at residue 31 to 33 (NWK). His118 (electrophile) is an active-site residue. Residue Glu188 is the Proton acceptor of the active site. Substrate-binding positions include Gly194, Ser234, and 255-256 (GG).

It belongs to the triosephosphate isomerase family. In terms of assembly, homodimer.

The protein localises to the cytoplasm. The catalysed reaction is D-glyceraldehyde 3-phosphate = dihydroxyacetone phosphate. The protein operates within carbohydrate biosynthesis; gluconeogenesis. Its pathway is carbohydrate degradation; glycolysis; D-glyceraldehyde 3-phosphate from glycerone phosphate: step 1/1. Its function is as follows. Involved in the gluconeogenesis. Catalyzes stereospecifically the conversion of dihydroxyacetone phosphate (DHAP) to D-glyceraldehyde-3-phosphate (G3P). The polypeptide is Triosephosphate isomerase (Chlamydia trachomatis serovar D (strain ATCC VR-885 / DSM 19411 / UW-3/Cx)).